A 494-amino-acid chain; its full sequence is Ell-associated factor Eaf (494 aa).

Residues 119–138 (KTRSEVTNKPSLMSATNAPM) are compositionally biased toward polar residues. 2 disordered regions span residues 119–212 (KTRS…PAWH) and 243–494 (QANI…DDDD). Positions 139 to 156 (SNGAPVPSSAAAGTGSAG) are enriched in low complexity. Positions 159–178 (ENSTMRISSKTKVSTGSRRN) are enriched in polar residues. Ser-188 bears the Phosphoserine mark. Composition is skewed to polar residues over residues 243–256 (QANI…SSAG) and 280–306 (QQLT…NNYA). Residues 307-319 (QQQQQQQQQQLQQ) show a composition bias toward low complexity. Residues 320-332 (RASFSHSNHSNSM) show a composition bias toward polar residues. Residues 344–373 (QTAQSMAQAAAALEQQIGGELSASSSSSES) show a composition bias toward low complexity. The span at 374-389 (DSSDSDSGSDSDDSTE) shows a compositional bias: acidic residues. A compositionally biased stretch (low complexity) spans 414-424 (HQQQQHMHQLP). The segment covering 437 to 454 (SHHHHQQQQQSHHHHHHQ) has biased composition (basic residues). 2 stretches are compositionally biased toward low complexity: residues 455–464 (QQQQQQHQQS) and 475–488 (NDLL…SSNS).

The protein belongs to the EAF family.

It is found in the nucleus. Functionally, promotes transcriptional elongation by Su(Tpl)/ELL. Essential for development. This Drosophila virilis (Fruit fly) protein is Ell-associated factor Eaf.